The chain runs to 303 residues: Methionyl-tRNA formyltransferase (303 aa).

S108 to P111 provides a ligand contact to (6S)-5,6,7,8-tetrahydrofolate.

Belongs to the Fmt family.

It carries out the reaction L-methionyl-tRNA(fMet) + (6R)-10-formyltetrahydrofolate = N-formyl-L-methionyl-tRNA(fMet) + (6S)-5,6,7,8-tetrahydrofolate + H(+). Functionally, attaches a formyl group to the free amino group of methionyl-tRNA(fMet). The formyl group appears to play a dual role in the initiator identity of N-formylmethionyl-tRNA by promoting its recognition by IF2 and preventing the misappropriation of this tRNA by the elongation apparatus. In Rickettsia typhi (strain ATCC VR-144 / Wilmington), this protein is Methionyl-tRNA formyltransferase.